The sequence spans 507 residues: Sterol 14-alpha demethylase CYP51A (507 aa).

The chain crosses the membrane as a helical span at residues 7–29; sequence YPLWVLVALFAVIIANLLYQQLP. Tyrosine 105 provides a ligand contact to lanosterol. A heme-binding site is contributed by cysteine 449.

This sequence belongs to the cytochrome P450 family. The cofactor is heme.

It localises to the endoplasmic reticulum membrane. The enzyme catalyses a 14alpha-methyl steroid + 3 reduced [NADPH--hemoprotein reductase] + 3 O2 = a Delta(14) steroid + formate + 3 oxidized [NADPH--hemoprotein reductase] + 4 H2O + 4 H(+). The catalysed reaction is a 14alpha-methyl steroid + reduced [NADPH--hemoprotein reductase] + O2 = a 14alpha-hydroxymethyl steroid + oxidized [NADPH--hemoprotein reductase] + H2O + H(+). It catalyses the reaction a 14alpha-hydroxymethyl steroid + reduced [NADPH--hemoprotein reductase] + O2 = a 14alpha-formyl steroid + oxidized [NADPH--hemoprotein reductase] + 2 H2O + H(+). It carries out the reaction a 14alpha-formyl steroid + reduced [NADPH--hemoprotein reductase] + O2 = a Delta(14) steroid + formate + oxidized [NADPH--hemoprotein reductase] + H2O + 2 H(+). The enzyme catalyses lanosterol + 3 reduced [NADPH--hemoprotein reductase] + 3 O2 = 4,4-dimethyl-5alpha-cholesta-8,14,24-trien-3beta-ol + formate + 3 oxidized [NADPH--hemoprotein reductase] + 4 H2O + 4 H(+). The catalysed reaction is lanosterol + reduced [NADPH--hemoprotein reductase] + O2 = 32-hydroxylanosterol + oxidized [NADPH--hemoprotein reductase] + H2O + H(+). It catalyses the reaction 32-hydroxylanosterol + reduced [NADPH--hemoprotein reductase] + O2 = 32-oxolanosterol + oxidized [NADPH--hemoprotein reductase] + 2 H2O + H(+). It carries out the reaction 32-oxolanosterol + reduced [NADPH--hemoprotein reductase] + O2 = 4,4-dimethyl-5alpha-cholesta-8,14,24-trien-3beta-ol + formate + oxidized [NADPH--hemoprotein reductase] + H2O + 2 H(+). The enzyme catalyses eburicol + 3 reduced [NADPH--hemoprotein reductase] + 3 O2 = 14-demethyleburicol + formate + 3 oxidized [NADPH--hemoprotein reductase] + 4 H2O + 4 H(+). The catalysed reaction is eburicol + reduced [NADPH--hemoprotein reductase] + O2 = 32-hydroxyeburicol + oxidized [NADPH--hemoprotein reductase] + H2O + H(+). It catalyses the reaction 32-hydroxyeburicol + reduced [NADPH--hemoprotein reductase] + O2 = 32-oxoeburicol + oxidized [NADPH--hemoprotein reductase] + 2 H2O + H(+). It carries out the reaction 32-oxoeburicol + reduced [NADPH--hemoprotein reductase] + O2 = 14-demethyleburicol + formate + oxidized [NADPH--hemoprotein reductase] + H2O + 2 H(+). It participates in steroid metabolism; ergosterol biosynthesis. Together with cyp51B and cyp51C, encodes the sterol 14alpha-demethylase that plays a critical role in the third module of ergosterol biosynthesis pathway, being ergosterol the major sterol component in fungal membranes that participates in a variety of functions. CYP51A encodes the sterol 14-alpha-demethylase induced on ergosterol depletion and is responsible for the intrinsic variation in azole sensitivity. The third module or late pathway involves the ergosterol synthesis itself through consecutive reactions that mainly occur in the endoplasmic reticulum (ER) membrane. In filamentous fungi, during the initial step of this module, lanosterol (lanosta-8,24-dien-3beta-ol) can be metabolized to eburicol. Sterol 14alpha-demethylase catalyzes the three-step oxidative removal of the 14alpha-methyl group (C-32) of both these sterols in the form of formate, and converts eburicol and lanosterol to 14-demethyleburicol (4,4,24-trimethylergosta-8,14,24(28)-trienol) and 4,4-dimethyl-5alpha-cholesta-8,14,24-trien-3beta-ol, respectively, which are further metabolized by other enzymes in the pathway to ergosterol. Can also use substrates not intrinsic to fungi, such as 24,25-dihydrolanosterol (DHL), producing 4,4'-dimethyl-8,14-cholestadien-3-beta-ol, but at lower rates than the endogenous substrates. This chain is Sterol 14-alpha demethylase CYP51A, found in Gibberella zeae (strain ATCC MYA-4620 / CBS 123657 / FGSC 9075 / NRRL 31084 / PH-1) (Wheat head blight fungus).